The sequence spans 294 residues: NAD kinase (294 aa).

The active-site Proton acceptor is the D74. NAD(+)-binding positions include 74–75, R79, 149–150, D179, 190–195, and A214; these read DG, NE, and TGYSLS.

The protein belongs to the NAD kinase family. A divalent metal cation serves as cofactor.

The protein resides in the cytoplasm. It carries out the reaction NAD(+) + ATP = ADP + NADP(+) + H(+). Involved in the regulation of the intracellular balance of NAD and NADP, and is a key enzyme in the biosynthesis of NADP. Catalyzes specifically the phosphorylation on 2'-hydroxyl of the adenosine moiety of NAD to yield NADP. The chain is NAD kinase from Flavobacterium johnsoniae (strain ATCC 17061 / DSM 2064 / JCM 8514 / BCRC 14874 / CCUG 350202 / NBRC 14942 / NCIMB 11054 / UW101) (Cytophaga johnsonae).